Here is a 457-residue protein sequence, read N- to C-terminus: Glutamate--tRNA ligase 2 (457 aa).

The 'HIGH' region motif lies at 8–18 (PSPTGYIHIGN). The 'KMSKS' region signature appears at 249-253 (GFSKR). K252 contacts ATP.

This sequence belongs to the class-I aminoacyl-tRNA synthetase family. Glutamate--tRNA ligase type 1 subfamily. As to quaternary structure, monomer.

It is found in the cytoplasm. It carries out the reaction tRNA(Glu) + L-glutamate + ATP = L-glutamyl-tRNA(Glu) + AMP + diphosphate. Its function is as follows. Catalyzes the attachment of glutamate to tRNA(Glu) in a two-step reaction: glutamate is first activated by ATP to form Glu-AMP and then transferred to the acceptor end of tRNA(Glu). The polypeptide is Glutamate--tRNA ligase 2 (Bartonella tribocorum (strain CIP 105476 / IBS 506)).